The chain runs to 811 residues: Zinc finger protein 839 (811 aa).

The segment at 197 to 222 adopts a C2H2-type zinc-finger fold; sequence FKCQTCEKSYIGKGGLARHFKLNPGH. Disordered regions lie at residues 329–349, 455–555, and 612–654; these read QRRAAQLPGGPAAAGEQRASP, PDNL…NGSV, and ALEH…AEAG. A compositionally biased stretch (basic and acidic residues) spans 476 to 485; it reads SSEKREREAA. Residues 501 to 510 show a composition bias toward polar residues; the sequence is SNDTTESLAA.

The protein is Zinc finger protein 839 (ZNF839) of Homo sapiens (Human).